The sequence spans 119 residues: RIIa domain-containing protein 1 (119 aa).

An RIIa domain is found at 70–104 (KEVSLLISGFFREMFLKRPDNILEFAAHYFTDPRL).

In terms of tissue distribution, abundant in tissues rich in highly ciliated cells, such as testis, trachea and olfactory epithelium.

This Mus musculus (Mouse) protein is RIIa domain-containing protein 1 (Riiad1).